The following is a 451-amino-acid chain: Cindoxin reductase (451 aa).

FAD contacts are provided by Ala-24, Glu-45, Leu-53, and Val-89. NADP(+)-binding positions include 157 to 160 (NGNV) and 197 to 198 (RS). Residues Trp-338 and 345–347 (GGI) contribute to the FAD site. Gly-345 lines the NADP(+) pocket.

This sequence belongs to the ferredoxin--NADP reductase type 1 family. It depends on FAD as a cofactor.

In terms of biological role, involved in the degradation of cineol (eucalyptol). Catalyzes the reduction of cindoxin (CinC). This Citrobacter braakii protein is Cindoxin reductase (cinB).